A 444-amino-acid chain; its full sequence is Alpha-1,3-mannosyl-glycoprotein 2-beta-N-acetylglucosaminyltransferase (444 aa).

The Cytoplasmic segment spans residues 1–6; that stretch reads MARISC. A helical; Signal-anchor for type II membrane protein membrane pass occupies residues 7–24; that stretch reads DLRFLLIPAAFMFIYIQM. Residues 25 to 444 are Lumenal-facing; it reads RLFQTQSQYA…SVMQLGIRNS (420 aa). Residues 61-92 adopt a coiled-coil conformation; the sequence is KQSRIVALEDMKNRQDEELVQLKDLIQTFEKK. Arg115, Asp144, His188, and Asp210 together coordinate substrate. Asp211 is a Mn(2+) binding site. The active-site Proton acceptor is Asp287. Ser318 lines the substrate pocket. The N-linked (GlcNAc...) asparagine glycan is linked to Asn351.

The protein belongs to the glycosyltransferase 13 family. Mn(2+) is required as a cofactor. Glycosylated. In terms of tissue distribution, expressed in roots, stems, leaves and flowers.

The protein localises to the golgi apparatus membrane. It carries out the reaction N(4)-(alpha-D-Man-(1-&gt;3)-[alpha-D-Man-(1-&gt;3)-[alpha-D-Man-(1-&gt;6)]-alpha-D-Man-(1-&gt;6)]-beta-D-Man-(1-&gt;4)-beta-D-GlcNAc-(1-&gt;4)-beta-D-GlcNAc)-L-asparaginyl-[protein] (N-glucan mannose isomer 5A1,2) + UDP-N-acetyl-alpha-D-glucosamine = N(4)-{beta-D-GlcNAc-(1-&gt;2)-alpha-D-Man-(1-&gt;3)-[alpha-D-Man-(1-&gt;3)-[alpha-D-Man-(1-&gt;6)]-alpha-D-Man-(1-&gt;6)]-beta-D-Man-(1-&gt;4)-beta-D-GlcNAc-(1-&gt;4)-beta-D-GlcNAc}-L-asparaginyl-[protein] + UDP + H(+). The protein operates within protein modification; protein glycosylation. In terms of biological role, initiates complex N-linked carbohydrate formation. Essential for the conversion of high-mannose to hybrid and complex N-glycans. Required for normal root growth and morphology. The polypeptide is Alpha-1,3-mannosyl-glycoprotein 2-beta-N-acetylglucosaminyltransferase (Arabidopsis thaliana (Mouse-ear cress)).